A 715-amino-acid chain; its full sequence is Fatty acid oxidation complex subunit alpha (715 aa).

The interval 1-190 (MIYQGKAITV…KVGAVDAVVA (190 aa)) is enoyl-CoA hydratase/isomerase. Residue Asp-297 participates in substrate binding. The segment at 312-715 (KDVKLAAVLG…MAKNGQKFFG (404 aa)) is 3-hydroxyacyl-CoA dehydrogenase. NAD(+) contacts are provided by residues Met-325, Asp-344, 401-403 (VVE), Lys-408, and Ser-430. His-451 functions as the For 3-hydroxyacyl-CoA dehydrogenase activity in the catalytic mechanism. Asn-454 serves as a coordination point for NAD(+). Substrate is bound by residues Asn-501 and Tyr-660.

The protein in the N-terminal section; belongs to the enoyl-CoA hydratase/isomerase family. This sequence in the C-terminal section; belongs to the 3-hydroxyacyl-CoA dehydrogenase family. As to quaternary structure, heterotetramer of two alpha chains (FadB) and two beta chains (FadA).

It catalyses the reaction a (3S)-3-hydroxyacyl-CoA + NAD(+) = a 3-oxoacyl-CoA + NADH + H(+). It carries out the reaction a (3S)-3-hydroxyacyl-CoA = a (2E)-enoyl-CoA + H2O. The catalysed reaction is a 4-saturated-(3S)-3-hydroxyacyl-CoA = a (3E)-enoyl-CoA + H2O. The enzyme catalyses (3S)-3-hydroxybutanoyl-CoA = (3R)-3-hydroxybutanoyl-CoA. It catalyses the reaction a (3Z)-enoyl-CoA = a 4-saturated (2E)-enoyl-CoA. It carries out the reaction a (3E)-enoyl-CoA = a 4-saturated (2E)-enoyl-CoA. It functions in the pathway lipid metabolism; fatty acid beta-oxidation. In terms of biological role, involved in the aerobic and anaerobic degradation of long-chain fatty acids via beta-oxidation cycle. Catalyzes the formation of 3-oxoacyl-CoA from enoyl-CoA via L-3-hydroxyacyl-CoA. It can also use D-3-hydroxyacyl-CoA and cis-3-enoyl-CoA as substrate. The chain is Fatty acid oxidation complex subunit alpha from Pseudomonas paraeruginosa (strain DSM 24068 / PA7) (Pseudomonas aeruginosa (strain PA7)).